The sequence spans 61 residues: Protein translocase subunit SecE (61 aa).

A helical transmembrane segment spans residues 39–59; sequence LGIILIGLIGMLIRIMGILVL.

The protein belongs to the SecE/SEC61-gamma family. In terms of assembly, component of the Sec protein translocase complex. Heterotrimer consisting of SecY (alpha), SecG (beta) and SecE (gamma) subunits. The heterotrimers can form oligomers, although 1 heterotrimer is thought to be able to translocate proteins. Interacts with the ribosome. May interact with SecDF, and other proteins may be involved.

It is found in the cell membrane. Its function is as follows. Essential subunit of the Sec protein translocation channel SecYEG. Clamps together the 2 halves of SecY. May contact the channel plug during translocation. In Pyrococcus abyssi (strain GE5 / Orsay), this protein is Protein translocase subunit SecE.